The primary structure comprises 387 residues: Leucine aminopeptidase 1 (387 aa).

The first 18 residues, 1-18 (MKIRAALALSATASGVLA), serve as a signal peptide directing secretion. The propeptide occupies 19-87 (AVVPQQALLN…YPTLHQASNV (69 aa)). N-linked (GlcNAc...) asparagine glycosylation occurs at Asn179. 4 residues coordinate Zn(2+): His187, Asp206, Glu245, and Asp272. Cys321 and Cys325 form a disulfide bridge. His354 provides a ligand contact to Zn(2+).

Belongs to the peptidase M28 family. M28E subfamily. In terms of assembly, monomer. Zn(2+) serves as cofactor.

It localises to the secreted. In terms of biological role, extracellular aminopeptidase that allows assimilation of proteinaceous substrates. In Aspergillus oryzae (strain ATCC 42149 / RIB 40) (Yellow koji mold), this protein is Leucine aminopeptidase 1 (lap1).